The sequence spans 818 residues: Glycerol-3-phosphate acyltransferase (818 aa).

The HXXXXD motif motif lies at 305–310 (HRSHMD).

It belongs to the GPAT/DAPAT family.

The protein resides in the cell inner membrane. The catalysed reaction is sn-glycerol 3-phosphate + an acyl-CoA = a 1-acyl-sn-glycero-3-phosphate + CoA. It functions in the pathway phospholipid metabolism; CDP-diacylglycerol biosynthesis; CDP-diacylglycerol from sn-glycerol 3-phosphate: step 1/3. This chain is Glycerol-3-phosphate acyltransferase, found in Photorhabdus laumondii subsp. laumondii (strain DSM 15139 / CIP 105565 / TT01) (Photorhabdus luminescens subsp. laumondii).